A 118-amino-acid chain; its full sequence is SPbeta prophage-derived uncharacterized protein YoqR (118 aa).

The protein is SPbeta prophage-derived uncharacterized protein YoqR (yoqR) of Bacillus subtilis (strain 168).